The primary structure comprises 217 residues: MKIFLDTANIDEIRQGVEWGIVDGVTTNPTLISKEGADFEKRIKEICELVQGPVSAEVISLKWDEMVEEARKLASIDDFVVVKIPMTPDGIKAVKILSAEGIKTNVTLVFSANQALLAAKAGATYVSPFIGRIDDNGNDGLRLLEEIMQIYTNYGFETEVIAASVRHPMHVVEAAMIGVDIATIPFDVLKKMFLHPLTDVGIKRFLQDWEEYKKNKK.

Lys-83 functions as the Schiff-base intermediate with substrate in the catalytic mechanism.

The protein belongs to the transaldolase family. Type 3B subfamily.

It localises to the cytoplasm. The enzyme catalyses D-sedoheptulose 7-phosphate + D-glyceraldehyde 3-phosphate = D-erythrose 4-phosphate + beta-D-fructose 6-phosphate. It functions in the pathway carbohydrate degradation; pentose phosphate pathway; D-glyceraldehyde 3-phosphate and beta-D-fructose 6-phosphate from D-ribose 5-phosphate and D-xylulose 5-phosphate (non-oxidative stage): step 2/3. Its function is as follows. Transaldolase is important for the balance of metabolites in the pentose-phosphate pathway. The sequence is that of Probable transaldolase from Fervidobacterium nodosum (strain ATCC 35602 / DSM 5306 / Rt17-B1).